The following is a 64-amino-acid chain: Large ribosomal subunit protein bL32 (64 aa).

The disordered stretch occupies residues 1-35; it reads MAVQKSRVTPSRRGQRRSHDALTAKQLSTDPTSGE.

The protein belongs to the bacterial ribosomal protein bL32 family.

This is Large ribosomal subunit protein bL32 from Xanthomonas axonopodis pv. citri (strain 306).